The following is a 444-amino-acid chain: MLKVAIVGKPNVGKSTLFNRIIKVNKSIVDDKPGITRDRIYANAEWLTQHFKLIDTGGLMLDEFDFKKQIELQVNYAITEADVIVFLVSYKEGINNDDHYVAKILKKHKNKKILLAVNKSETRNKDSYDDHEYLRFGFQKPYFISANHGIGIGDLLDAIVDTKLKEIKEEDTFKFCIIGRPNVGKSSLVNCILNEDRMITSNIANTTRDAIDSNFKKDNLLYTIIDTAGIRRKGKIQENVDKYAYLRVEQSISRSNLIVIVLDGSEEFNEQDEVIAGLAHKANIPSIIVVNKWDIVKEKDEKTMNKFIKTIRIKFKFLSWTPIVFLSAIENKRINTLFNEIKSIRENLNLKFNSKILTDLVFKLQMLNSPPLFNRGRIKINHVTQVDGQIPTFVLFCNNPEYLHFSYARYLENEIRKSLGLNNVPITLYFKNKTDKIRGKKNDK.

2 EngA-type G domains span residues 2 to 167 (LKVA…LKEI) and 173 to 349 (FKFC…ENLN). Residues 8-15 (GKPNVGKS), 55-59 (DTGGL), 118-121 (NKSE), 179-186 (GRPNVGKS), 226-230 (DTAGI), and 291-294 (NKWD) each bind GTP. The region spanning 350-434 (LKFNSKILTD…PITLYFKNKT (85 aa)) is the KH-like domain.

This sequence belongs to the TRAFAC class TrmE-Era-EngA-EngB-Septin-like GTPase superfamily. EngA (Der) GTPase family. In terms of assembly, associates with the 50S ribosomal subunit.

Its function is as follows. GTPase that plays an essential role in the late steps of ribosome biogenesis. The polypeptide is GTPase Der (Malacoplasma penetrans (strain HF-2) (Mycoplasma penetrans)).